We begin with the raw amino-acid sequence, 86 residues long: Large ribosomal subunit protein bL27 (86 aa).

Over residues 1 to 10 the composition is skewed to gly residues; it reads MAQKKGGGST. The disordered stretch occupies residues 1–21; that stretch reads MAQKKGGGSTRNGRDSESKRL.

It belongs to the bacterial ribosomal protein bL27 family.

This is Large ribosomal subunit protein bL27 from Ralstonia pickettii (strain 12J).